Here is a 78-residue protein sequence, read N- to C-terminus: UPF0154 protein SSU98_1719 (78 aa).

Residues 3–23 traverse the membrane as a helical segment; the sequence is LGLAILLIVLAFAGGVALGIY.

This sequence belongs to the UPF0154 family.

It localises to the cell membrane. This chain is UPF0154 protein SSU98_1719, found in Streptococcus suis (strain 98HAH33).